A 331-amino-acid chain; its full sequence is MKKVIFSGIQPSGQLTLGNYIGALKQFGQFQDEYECFYCIVDEHAITVPQDRLKLREQTRSLAALYLAVGLDPEKSTLFIQSEVAAHAQAAWILQCNVYIGELERMTQFKDKSAGKAGVSAGLLTYPPLMAADILLYQTDLVPVGEDQKQHIELTRDLAERFNKKHADIFTMPEVFIPKQGARVMSLQDPTKKMSKSDANLKNAIFLLDPPATIRKKIKSAVTDSSGIIEYNKEEKPGVSNLLTIYSVITGETIASIEEKYVGKGYGDFKTDLAELVVSELEPIQERYYAYLKSEELDTILDAGAEKAARVANKTLKKMENGVGLGRKRRK.

Residues 10–12 (QPS) and 18–19 (GN) each bind ATP. The 'HIGH' region motif lies at 11–19 (PSGQLTLGN). D133 is a binding site for L-tryptophan. Residues 145-147 (GED), V184, and 193-197 (KMSKS) each bind ATP. Positions 193-197 (KMSKS) match the 'KMSKS' region motif.

It belongs to the class-I aminoacyl-tRNA synthetase family. In terms of assembly, homodimer.

The protein localises to the cytoplasm. The catalysed reaction is tRNA(Trp) + L-tryptophan + ATP = L-tryptophyl-tRNA(Trp) + AMP + diphosphate + H(+). In terms of biological role, catalyzes the attachment of tryptophan to tRNA(Trp). The chain is Tryptophan--tRNA ligase from Listeria monocytogenes serovar 1/2a (strain ATCC BAA-679 / EGD-e).